Here is a 501-residue protein sequence, read N- to C-terminus: Lysine--tRNA ligase (501 aa).

Residues Glu-406 and Glu-413 each coordinate Mg(2+).

Belongs to the class-II aminoacyl-tRNA synthetase family. In terms of assembly, homodimer. It depends on Mg(2+) as a cofactor.

The protein resides in the cytoplasm. It catalyses the reaction tRNA(Lys) + L-lysine + ATP = L-lysyl-tRNA(Lys) + AMP + diphosphate. The chain is Lysine--tRNA ligase (lysS) from Halalkalibacterium halodurans (strain ATCC BAA-125 / DSM 18197 / FERM 7344 / JCM 9153 / C-125) (Bacillus halodurans).